Here is a 350-residue protein sequence, read N- to C-terminus: Eukaryotic translation initiation factor 3 subunit I (350 aa).

WD repeat units lie at residues 8 to 49 (GHER…GTLE), 51 to 89 (HQGV…CVYT), 91 to 135 (NSPS…ASLT), 149 to 190 (QNGS…KSLQ), 198 to 240 (EKNV…KVYK), and 296 to 335 (GHFG…KDFL).

It belongs to the eIF-3 subunit I family. As to quaternary structure, component of the eukaryotic translation initiation factor 3 (eIF-3) complex.

The protein resides in the cytoplasm. Component of the eukaryotic translation initiation factor 3 (eIF-3) complex, which is involved in protein synthesis of a specialized repertoire of mRNAs and, together with other initiation factors, stimulates binding of mRNA and methionyl-tRNAi to the 40S ribosome. The eIF-3 complex specifically targets and initiates translation of a subset of mRNAs involved in cell proliferation. The sequence is that of Eukaryotic translation initiation factor 3 subunit I from Lodderomyces elongisporus (strain ATCC 11503 / CBS 2605 / JCM 1781 / NBRC 1676 / NRRL YB-4239) (Yeast).